The chain runs to 362 residues: G-prodeshotein coupled receptor 4 (362 aa).

Topologically, residues 1 to 8 are extracellular; sequence MGNHTWEG. Asn-3 carries an N-linked (GlcNAc...) asparagine glycan. A helical transmembrane segment spans residues 9 to 45; that stretch reads CHVDSRVDHLFPPSLYIFVIGVGLPTNCLALWAAYRQ. Intrachain disulfides connect Cys-9-Cys-258 and Cys-90-Cys-168. Over 46-49 the chain is Cytoplasmic; that stretch reads VQQR. The chain crosses the membrane as a helical span at residues 50-80; that stretch reads NELGVYLMNLSIADLLYICTLPLWVDYFLHH. The Extracellular portion of the chain corresponds to 81–85; it reads DNWIH. Residues 86–121 form a helical membrane-spanning segment; it reads GPGSCKLFGFIFYTNIYISIAFLCCISVDRYLAVAH. Over 122–129 the chain is Cytoplasmic; that stretch reads PLRFARLR. The chain crosses the membrane as a helical span at residues 130–156; sequence RVKTAVAVSSVVWATELGANSAPLFHD. The Extracellular portion of the chain corresponds to 157-172; the sequence is ELFRDRYNHTFCFEKF. The extracellular loop 2 (ECL2) stretch occupies residues 157 to 172; it reads ELFRDRYNHTFCFEKF. Residue Asn-164 is glycosylated (N-linked (GlcNAc...) asparagine). The helical transmembrane segment at 173–210 threads the bilayer; the sequence is PMEGWVAWMNLYRVFVGFLFPWALMLLSYRGILRAVRG. The Cytoplasmic portion of the chain corresponds to 211–214; that stretch reads SVST. The chain crosses the membrane as a helical span at residues 215–250; it reads ERQEKAKIKRLALSLIAIVLVCFAPYHVLLLSRSAI. The Extracellular portion of the chain corresponds to 251 to 260; sequence YLGRPWDCGF. Residues 261–289 form a helical membrane-spanning segment; it reads EERVFSAYHSSLAFTSLNCVADPILYCLV. The Cytoplasmic segment spans residues 290–362; sequence NEGARSDVAK…VQLKMLPPAQ (73 aa). The tract at residues 335–362 is disordered; it reads AKAMTGSWAATPPSQGDQVQLKMLPPAQ.

This sequence belongs to the G-protein coupled receptor 1 family.

Its subcellular location is the cell membrane. With respect to regulation, activated by a network of residues that connects an extracellular-facing cavity to Glu-145, a conserved charged residue buried in the transmembrane core of the receptor. Protonation likely drives conformational changes in extracellular loop 2 (ECL2), which stabilizes movement of transmembrane 3 (TM3) and a series of rearrangements that connect the extracellular-facing cavity to Glu-145, a residue only conserved in proton-sensing G-protein coupled receptors. Its function is as follows. Proton-sensing G-protein coupled receptor activated by extracellular pH, which is required to monitor pH changes and generate adaptive reactions. Activated by an optimal pH of 6.8-7.2. Ligand binding causes a conformation change that triggers signaling via guanine nucleotide-binding proteins (G proteins) and modulates the activity of downstream effectors, such as adenylate cyclase. GPR4 is mainly coupled to G(s) G proteins and mediates activation of adenylate cyclase activity. May also couple with G(q) and G(12)/G(13) G proteins. Acts as a key regulator of respiratory sensitivity to CO2/H(+) in brain retrotrapezoid nucleus neurons: acts by mediating detection of protons generated by the formation of carbonic acid in the blood, an important mechanism to impulse to breathe. Also acts as a regulator of acid secretion in the kidney collecting duct by maintaining acid-base homeostasis in the kidney. Acidosis-induced GPR4 activation increases paracellular gap formation and permeability of vascular endothelial cells, possibly through the G(12)/G(13)/Rho GTPase signaling pathway. The chain is G-prodeshotein coupled receptor 4 from Homo sapiens (Human).